A 149-amino-acid chain; its full sequence is Arginine repressor (149 aa).

The protein belongs to the ArgR family.

It localises to the cytoplasm. It functions in the pathway amino-acid biosynthesis; L-arginine biosynthesis [regulation]. In terms of biological role, regulates arginine biosynthesis genes. This is Arginine repressor from Chlorobium phaeobacteroides (strain DSM 266 / SMG 266 / 2430).